A 683-amino-acid polypeptide reads, in one-letter code: Eukaryotic translation initiation factor 3 subunit B (683 aa).

The tract at residues 1–25 (MAKKKGEEQDFEEEPNFDDPEGFVD) is disordered. Residues 9–25 (QDFEEEPNFDDPEGFVD) show a composition bias toward acidic residues. An RRM domain is found at 49–133 (NVIVVDNIPV…YTLLVNRFAD (85 aa)). 6 WD repeats span residues 199–238 (KRERFTDTYVKWSPKGTYIVTFHKQGVVVWGGSSFVKVNK), 240–279 (AHSNAQFVDISPCEQYLVTYGPNGQKIVIWDIRTGAEKRT), 283–321 (DGMSNASMLRWSHDDRYVARLVDSQIQIYDTTTFFLLDM), 324–359 (IRVEGIRNFSWSPTDNIIAYWVAEEVDVPAKVTLMA), 435–477 (EVKE…EPVL), and 522–567 (GDHY…KRVN). A coiled-coil region spans residues 611–638 (MTRASKELIEKRAKLREQFTEYRSKRVK).

The protein belongs to the eIF-3 subunit B family. Component of the eukaryotic translation initiation factor 3 (eIF-3) complex.

The protein resides in the cytoplasm. In terms of biological role, RNA-binding component of the eukaryotic translation initiation factor 3 (eIF-3) complex, which is involved in protein synthesis of a specialized repertoire of mRNAs and, together with other initiation factors, stimulates binding of mRNA and methionyl-tRNAi to the 40S ribosome. The eIF-3 complex specifically targets and initiates translation of a subset of mRNAs involved in cell proliferation. In Anopheles gambiae (African malaria mosquito), this protein is Eukaryotic translation initiation factor 3 subunit B.